The sequence spans 879 residues: Phosphoenolpyruvate carboxylase (879 aa).

Residues His138 and Lys545 contribute to the active site.

Belongs to the PEPCase type 1 family. It depends on Mg(2+) as a cofactor.

The catalysed reaction is oxaloacetate + phosphate = phosphoenolpyruvate + hydrogencarbonate. Its function is as follows. Forms oxaloacetate, a four-carbon dicarboxylic acid source for the tricarboxylic acid cycle. In Haemophilus influenzae (strain ATCC 51907 / DSM 11121 / KW20 / Rd), this protein is Phosphoenolpyruvate carboxylase (ppc).